The following is a 489-amino-acid chain: MSVYGLQRLYIGGGYVDATSGKTFDTFDPATGELLAQVQQASAADVDRAVASAQEGQREWAAMTAMQRSRILRRAVDLLRERNDELAAIETRDTGKPIGETLAVDIVTGADVIEYYAGLATAIEGLQVPLRAESFVYTRREPLGVCAGIGAWNYPIQIACWKTAPALAAGNAMVFKPSEVTPLTALKLAEIYTEAGVPAGVFNVVQGDGSVGALLTGHPDIAKVSFTGGVETGKKVMSLAGASSLKEVTMELGGKSPLIVFDDADLDRAADIAVTANFFSSGQVCTNGTRVFMHRSVKDAFTQKVLERVKRIRVGKPTDADTNFGPLVSAAQLDKVLGFIESGKAEGAKLLAGGTRLTDGHFGSGQYVAPTVFGDCRDDMKIVREEIFGPVMSILDFESEDEVIARANDTHYGLAAGVVTENLSRAHRTIHRLEAGICWINTWGESPAEMPVGGYKQSGVGRENGITTLEHYTRIKSVQVELGRYNPVF.

T26 and D93 together coordinate K(+). NAD(+) is bound at residue 150 to 152 (GAW). The active-site Charge relay system is K162. 176–179 (KPSE) provides a ligand contact to NAD(+). A K(+)-binding site is contributed by V180. Residue 229 to 232 (GVET) participates in NAD(+) binding. L245 lines the K(+) pocket. Residue E251 is the Proton acceptor of the active site. Residues G253, C285, and E386 each coordinate NAD(+). C285 (nucleophile) is an active-site residue. Position 285 is a cysteine sulfenic acid (-SOH) (C285). K(+) contacts are provided by K456 and G459. The active-site Charge relay system is the E463.

Belongs to the aldehyde dehydrogenase family. In terms of assembly, dimer of dimers. It depends on K(+) as a cofactor.

It carries out the reaction betaine aldehyde + NAD(+) + H2O = glycine betaine + NADH + 2 H(+). It participates in amine and polyamine biosynthesis; betaine biosynthesis via choline pathway; betaine from betaine aldehyde: step 1/1. In terms of biological role, involved in the biosynthesis of the osmoprotectant glycine betaine. Catalyzes the irreversible oxidation of betaine aldehyde to the corresponding acid. This is Betaine aldehyde dehydrogenase from Burkholderia cenocepacia (strain ATCC BAA-245 / DSM 16553 / LMG 16656 / NCTC 13227 / J2315 / CF5610) (Burkholderia cepacia (strain J2315)).